The primary structure comprises 168 residues: Endoribonuclease YbeY (168 aa).

3 residues coordinate Zn(2+): H126, H130, and H136.

Belongs to the endoribonuclease YbeY family. It depends on Zn(2+) as a cofactor.

Its subcellular location is the cytoplasm. Functionally, single strand-specific metallo-endoribonuclease involved in late-stage 70S ribosome quality control and in maturation of the 3' terminus of the 16S rRNA. The chain is Endoribonuclease YbeY from Agrobacterium fabrum (strain C58 / ATCC 33970) (Agrobacterium tumefaciens (strain C58)).